An 880-amino-acid chain; its full sequence is Alanine--tRNA ligase (880 aa).

Zn(2+) contacts are provided by His-567, His-571, Cys-669, and His-673.

It belongs to the class-II aminoacyl-tRNA synthetase family. The cofactor is Zn(2+).

It is found in the cytoplasm. It carries out the reaction tRNA(Ala) + L-alanine + ATP = L-alanyl-tRNA(Ala) + AMP + diphosphate. Catalyzes the attachment of alanine to tRNA(Ala) in a two-step reaction: alanine is first activated by ATP to form Ala-AMP and then transferred to the acceptor end of tRNA(Ala). Also edits incorrectly charged Ser-tRNA(Ala) and Gly-tRNA(Ala) via its editing domain. The sequence is that of Alanine--tRNA ligase from Bacillus thuringiensis (strain Al Hakam).